The following is a 159-amino-acid chain: Defense protein l(2)34Fc (159 aa).

Residues 1 to 17 (MFRLLVLAACLAISVHA) form the signal peptide. Residues 18–159 (YSDGAPKAAC…GRVTKDIDVE (142 aa)) form the Reelin domain. Cys27 and Cys99 form a disulfide bridge.

The protein belongs to the insect defense protein family.

The protein localises to the secreted. Its function is as follows. May have antimicrobial activity. A late response immune regulated gene that is negatively regulated by spz during the immune response. In Drosophila melanogaster (Fruit fly), this protein is Defense protein l(2)34Fc (l(2)34Fc).